The primary structure comprises 290 residues: 33 kDa chaperonin (290 aa).

2 disulfide bridges follow: Cys231–Cys233 and Cys263–Cys266.

Belongs to the HSP33 family. Post-translationally, under oxidizing conditions two disulfide bonds are formed involving the reactive cysteines. Under reducing conditions zinc is bound to the reactive cysteines and the protein is inactive.

It is found in the cytoplasm. Redox regulated molecular chaperone. Protects both thermally unfolding and oxidatively damaged proteins from irreversible aggregation. Plays an important role in the bacterial defense system toward oxidative stress. This is 33 kDa chaperonin from Thermotoga sp. (strain RQ2).